Consider the following 351-residue polypeptide: Dihydroorotate dehydrogenase (quinone) (351 aa).

FMN is bound by residues 61-65 and Thr-85; that span reads AGLDK. A substrate-binding site is contributed by Lys-65. Position 110 to 114 (110 to 114) interacts with substrate; that stretch reads NRMGF. The FMN site is built by Asn-139 and Asn-172. Asn-172 contributes to the substrate binding site. The active-site Nucleophile is the Ser-175. Residue Asn-177 coordinates substrate. 2 residues coordinate FMN: Lys-217 and Thr-245. 246-247 is a binding site for substrate; the sequence is NT. Residues Gly-268, Gly-297, and 318-319 each bind FMN; that span reads YS.

This sequence belongs to the dihydroorotate dehydrogenase family. Type 2 subfamily. Monomer. It depends on FMN as a cofactor.

Its subcellular location is the cell membrane. The catalysed reaction is (S)-dihydroorotate + a quinone = orotate + a quinol. Its pathway is pyrimidine metabolism; UMP biosynthesis via de novo pathway; orotate from (S)-dihydroorotate (quinone route): step 1/1. Functionally, catalyzes the conversion of dihydroorotate to orotate with quinone as electron acceptor. This Xanthomonas euvesicatoria pv. vesicatoria (strain 85-10) (Xanthomonas campestris pv. vesicatoria) protein is Dihydroorotate dehydrogenase (quinone).